The primary structure comprises 163 residues: Lipoprotein signal peptidase (163 aa).

3 consecutive transmembrane segments (helical) span residues 7-27 (LSFLWLSAVAFVIDLLTKYLV), 64-84 (WQKYFFIALALIISAVLVYLL), and 99-119 (ALIIGGALANMADRAYHGFVV). Residues Asp-120 and Asp-138 contribute to the active site. A helical transmembrane segment spans residues 133–153 (VFNVADIAICVGVGLLILDSF).

The protein belongs to the peptidase A8 family.

It is found in the cell inner membrane. It carries out the reaction Release of signal peptides from bacterial membrane prolipoproteins. Hydrolyzes -Xaa-Yaa-Zaa-|-(S,diacylglyceryl)Cys-, in which Xaa is hydrophobic (preferably Leu), and Yaa (Ala or Ser) and Zaa (Gly or Ala) have small, neutral side chains.. It participates in protein modification; lipoprotein biosynthesis (signal peptide cleavage). This protein specifically catalyzes the removal of signal peptides from prolipoproteins. This chain is Lipoprotein signal peptidase, found in Actinobacillus succinogenes (strain ATCC 55618 / DSM 22257 / CCUG 43843 / 130Z).